An 870-amino-acid chain; its full sequence is Valine--tRNA ligase (870 aa).

A 'HIGH' region motif is present at residues 42 to 52; sequence PNVTGVLHIGH. The 'KMSKS' region signature appears at 527–531; sequence KMSKS. Position 530 (Lys-530) interacts with ATP. Residues 800 to 870 adopt a coiled-coil conformation; it reads LENVDLSGIL…ISVELQNLRG (71 aa).

The protein belongs to the class-I aminoacyl-tRNA synthetase family. ValS type 1 subfamily. In terms of assembly, monomer.

The protein resides in the cytoplasm. It carries out the reaction tRNA(Val) + L-valine + ATP = L-valyl-tRNA(Val) + AMP + diphosphate. Its function is as follows. Catalyzes the attachment of valine to tRNA(Val). As ValRS can inadvertently accommodate and process structurally similar amino acids such as threonine, to avoid such errors, it has a 'posttransfer' editing activity that hydrolyzes mischarged Thr-tRNA(Val) in a tRNA-dependent manner. This Campylobacter jejuni subsp. jejuni serotype O:2 (strain ATCC 700819 / NCTC 11168) protein is Valine--tRNA ligase.